The sequence spans 383 residues: S-adenosylmethionine synthase (383 aa).

H15 provides a ligand contact to ATP. Position 17 (D17) interacts with Mg(2+). Residue E43 participates in K(+) binding. L-methionine-binding residues include E56 and Q99. Residues 99–109 (QSPDINQGVDR) are flexible loop. ATP is bound by residues 164 to 166 (DAK), 230 to 231 (RF), D239, 245 to 246 (RK), A262, and K266. An L-methionine-binding site is contributed by D239. K270 contacts L-methionine.

It belongs to the AdoMet synthase family. In terms of assembly, homotetramer; dimer of dimers. Requires Mg(2+) as cofactor. K(+) serves as cofactor.

The protein resides in the cytoplasm. It catalyses the reaction L-methionine + ATP + H2O = S-adenosyl-L-methionine + phosphate + diphosphate. The protein operates within amino-acid biosynthesis; S-adenosyl-L-methionine biosynthesis; S-adenosyl-L-methionine from L-methionine: step 1/1. Its function is as follows. Catalyzes the formation of S-adenosylmethionine (AdoMet) from methionine and ATP. The overall synthetic reaction is composed of two sequential steps, AdoMet formation and the subsequent tripolyphosphate hydrolysis which occurs prior to release of AdoMet from the enzyme. The sequence is that of S-adenosylmethionine synthase from Shewanella loihica (strain ATCC BAA-1088 / PV-4).